A 116-amino-acid polypeptide reads, in one-letter code: MSNIIKQLEEEQLKQNVPSFRPGDTLEVKVWVVEGAKRRLQAFEGVVIAIRNRGLHSAFTLRKVSNGTGVERVFQTHSPVIDSITVKRKGAVRKAKLYYLRERSGKSARIKERLGA.

The protein belongs to the bacterial ribosomal protein bL19 family.

Functionally, this protein is located at the 30S-50S ribosomal subunit interface and may play a role in the structure and function of the aminoacyl-tRNA binding site. The polypeptide is Large ribosomal subunit protein bL19 (Actinobacillus succinogenes (strain ATCC 55618 / DSM 22257 / CCUG 43843 / 130Z)).